The chain runs to 383 residues: Acetylornithine deacetylase (383 aa).

Residue His-80 participates in Zn(2+) binding. Residue Asp-82 is part of the active site. Residue Asp-112 coordinates Zn(2+). Glu-144 is an active-site residue. Glu-145, Glu-169, and His-355 together coordinate Zn(2+).

Belongs to the peptidase M20A family. ArgE subfamily. Homodimer. It depends on Zn(2+) as a cofactor. Requires Co(2+) as cofactor. The cofactor is glutathione.

The protein resides in the cytoplasm. It catalyses the reaction N(2)-acetyl-L-ornithine + H2O = L-ornithine + acetate. It participates in amino-acid biosynthesis; L-arginine biosynthesis; L-ornithine from N(2)-acetyl-L-ornithine (linear): step 1/1. In terms of biological role, catalyzes the hydrolysis of the amide bond of N(2)-acetylated L-amino acids. Cleaves the acetyl group from N-acetyl-L-ornithine to form L-ornithine, an intermediate in L-arginine biosynthesis pathway, and a branchpoint in the synthesis of polyamines. The chain is Acetylornithine deacetylase from Pectobacterium carotovorum subsp. carotovorum (strain PC1).